The primary structure comprises 336 residues: Holliday junction branch migration complex subunit RuvB (336 aa).

Positions 1 to 175 (MEKYSFESVQ…FGMSFRLQFY (175 aa)) are large ATPase domain (RuvB-L). Residues leucine 14, arginine 15, glycine 56, lysine 59, threonine 60, threonine 61, 122 to 124 (EDF), arginine 165, tyrosine 175, and arginine 212 each bind ATP. Threonine 60 is a binding site for Mg(2+). The tract at residues 176–253 (EPKELSAIVI…CVRYALNELG (78 aa)) is small ATPAse domain (RuvB-S). A head domain (RuvB-H) region spans residues 256–336 (ELGFDELDLR…IPFLEQKGLF (81 aa)). Arginine 310 and arginine 315 together coordinate DNA.

It belongs to the RuvB family. In terms of assembly, homohexamer. Forms an RuvA(8)-RuvB(12)-Holliday junction (HJ) complex. HJ DNA is sandwiched between 2 RuvA tetramers; dsDNA enters through RuvA and exits via RuvB. An RuvB hexamer assembles on each DNA strand where it exits the tetramer. Each RuvB hexamer is contacted by two RuvA subunits (via domain III) on 2 adjacent RuvB subunits; this complex drives branch migration. In the full resolvosome a probable DNA-RuvA(4)-RuvB(12)-RuvC(2) complex forms which resolves the HJ.

Its subcellular location is the cytoplasm. It catalyses the reaction ATP + H2O = ADP + phosphate + H(+). In terms of biological role, the RuvA-RuvB-RuvC complex processes Holliday junction (HJ) DNA during genetic recombination and DNA repair, while the RuvA-RuvB complex plays an important role in the rescue of blocked DNA replication forks via replication fork reversal (RFR). RuvA specifically binds to HJ cruciform DNA, conferring on it an open structure. The RuvB hexamer acts as an ATP-dependent pump, pulling dsDNA into and through the RuvAB complex. RuvB forms 2 homohexamers on either side of HJ DNA bound by 1 or 2 RuvA tetramers; 4 subunits per hexamer contact DNA at a time. Coordinated motions by a converter formed by DNA-disengaged RuvB subunits stimulates ATP hydrolysis and nucleotide exchange. Immobilization of the converter enables RuvB to convert the ATP-contained energy into a lever motion, pulling 2 nucleotides of DNA out of the RuvA tetramer per ATP hydrolyzed, thus driving DNA branch migration. The RuvB motors rotate together with the DNA substrate, which together with the progressing nucleotide cycle form the mechanistic basis for DNA recombination by continuous HJ branch migration. Branch migration allows RuvC to scan DNA until it finds its consensus sequence, where it cleaves and resolves cruciform DNA. This Helicobacter hepaticus (strain ATCC 51449 / 3B1) protein is Holliday junction branch migration complex subunit RuvB.